A 214-amino-acid chain; its full sequence is 3-demethoxyubiquinol 3-hydroxylase (214 aa).

Residues E63, E93, H96, E145, E177, and H180 each coordinate Fe cation.

This sequence belongs to the COQ7 family. Fe cation is required as a cofactor.

Its subcellular location is the cell membrane. The catalysed reaction is a 5-methoxy-2-methyl-3-(all-trans-polyprenyl)benzene-1,4-diol + AH2 + O2 = a 3-demethylubiquinol + A + H2O. It functions in the pathway cofactor biosynthesis; ubiquinone biosynthesis. Its function is as follows. Catalyzes the hydroxylation of 2-nonaprenyl-3-methyl-6-methoxy-1,4-benzoquinol during ubiquinone biosynthesis. This is 3-demethoxyubiquinol 3-hydroxylase from Psychrobacter cryohalolentis (strain ATCC BAA-1226 / DSM 17306 / VKM B-2378 / K5).